We begin with the raw amino-acid sequence, 259 residues long: Formate channel BtFdhC (259 aa).

Residues 1 to 26 lie on the Cytoplasmic side of the membrane; sequence MAFHKPEQIAELVIEAGVQKVSQTLP. Residues 27 to 47 traverse the membrane as a helical segment; the sequence is AMLILGFLGGAFISLGFLLNI. Residues 48–66 lie on the Periplasmic side of the membrane; that stretch reads RVLGNLPERWGSLVNVLGG. Residues 67-97 form a helical membrane-spanning segment; sequence AVFPVGLMLVVLAGGELITGNMMSLSMALYA. The Cytoplasmic portion of the chain corresponds to 98-108; that stretch reads KKITLVSVLNN. Residues 109 to 130 traverse the membrane as a helical segment; it reads WVWITFMNFVGAIFVAYCFGHL. The Periplasmic segment spans residues 131–157; sequence GGLTEGDYLNKTVAIAEGKLHESFGRT. The chain crosses the membrane as a helical span at residues 158–176; the sequence is LILAIGCNWLVCLALWLAY. The Cytoplasmic portion of the chain corresponds to 177 to 187; sequence GTSDFVGKIIG. A helical membrane pass occupies residues 188 to 216; that stretch reads IWIPIMAFVVIGFQQVVANMFVISAVIFA. At 217 to 227 the chain is on the periplasmic side; the sequence is GHLTWMDLARN. Residues 228 to 250 traverse the membrane as a helical segment; the sequence is FVPVFIGNVIGGAGFVGFAYFAC. Over 251-259 the chain is Cytoplasmic; that stretch reads YQKQHSNMK.

Belongs to the FNT transporter (TC 1.A.16) family.

The protein localises to the cell inner membrane. It catalyses the reaction formate(in) = formate(out). Acts as a formate transporter. The protein is Formate channel BtFdhC of Bacillus thuringiensis.